A 459-amino-acid polypeptide reads, in one-letter code: Jacalin-related lectin 12 (459 aa).

3 Jacalin-type lectin domains span residues 2–148 (SQDS…YFTP), 151–296 (PTRM…YITT), and 298–443 (TLTK…YSFP).

It belongs to the jacalin lectin family.

This Arabidopsis thaliana (Mouse-ear cress) protein is Jacalin-related lectin 12 (JAL12).